Here is an 85-residue protein sequence, read N- to C-terminus: ATP synthase subunit c (85 aa).

2 helical membrane passes run I10–L30 and F53–F73.

It belongs to the ATPase C chain family. F-type ATPases have 2 components, F(1) - the catalytic core - and F(0) - the membrane proton channel. F(1) has five subunits: alpha(3), beta(3), gamma(1), delta(1), epsilon(1). F(0) has three main subunits: a(1), b(2) and c(10-14). The alpha and beta chains form an alternating ring which encloses part of the gamma chain. F(1) is attached to F(0) by a central stalk formed by the gamma and epsilon chains, while a peripheral stalk is formed by the delta and b chains.

It is found in the cell inner membrane. Its function is as follows. F(1)F(0) ATP synthase produces ATP from ADP in the presence of a proton or sodium gradient. F-type ATPases consist of two structural domains, F(1) containing the extramembraneous catalytic core and F(0) containing the membrane proton channel, linked together by a central stalk and a peripheral stalk. During catalysis, ATP synthesis in the catalytic domain of F(1) is coupled via a rotary mechanism of the central stalk subunits to proton translocation. Key component of the F(0) channel; it plays a direct role in translocation across the membrane. A homomeric c-ring of between 10-14 subunits forms the central stalk rotor element with the F(1) delta and epsilon subunits. The protein is ATP synthase subunit c of Shewanella halifaxensis (strain HAW-EB4).